The primary structure comprises 270 residues: Regulatory protein RecX (270 aa).

It belongs to the RecX family.

The protein resides in the cytoplasm. In terms of biological role, modulates RecA activity. This Bacillus cytotoxicus (strain DSM 22905 / CIP 110041 / 391-98 / NVH 391-98) protein is Regulatory protein RecX.